The following is a 244-amino-acid chain: MGRGKVEVKRIENKITRQVTFSKRKSGLLKKAYELSVLCDAEVSLIIFSTGGKLYEFSNVGVGRTIERYYRCKDNLLDNDTLEDTQGLRQEVTKLKCKYESLLRTHRNLVGEDLEGMSIKELQTLERQLEGALSATRKQKTQVMMEQMEELRRKERELGDINNKLKLETEDHDFKGFQDLLLNPVLTAGCSTDFSLQSTHQNYISDCNLGYFLQIGFQQHYEQGEGSSVTKSNARSDAETNFVQ.

In terms of domain architecture, MADS-box spans 3 to 57 (RGKVEVKRIENKITRQVTFSKRKSGLLKKAYELSVLCDAEVSLIIFSTGGKLYEF). The 91-residue stretch at 85–175 (TQGLRQEVTK…KLETEDHDFK (91 aa)) folds into the K-box domain.

It is found in the nucleus. Functionally, probable transcription factor. This chain is Agamous-like MADS-box protein AGL13 (AGL13), found in Arabidopsis thaliana (Mouse-ear cress).